The chain runs to 80 residues: Exodeoxyribonuclease 7 small subunit (80 aa).

This sequence belongs to the XseB family. Heterooligomer composed of large and small subunits.

The protein resides in the cytoplasm. It carries out the reaction Exonucleolytic cleavage in either 5'- to 3'- or 3'- to 5'-direction to yield nucleoside 5'-phosphates.. Bidirectionally degrades single-stranded DNA into large acid-insoluble oligonucleotides, which are then degraded further into small acid-soluble oligonucleotides. In Enterobacter sp. (strain 638), this protein is Exodeoxyribonuclease 7 small subunit.